Here is a 1722-residue protein sequence, read N- to C-terminus: Signal-induced proliferation-associated 1-like protein 2 (1722 aa).

Over residues 1–12 the composition is skewed to basic and acidic residues; sequence MSDPRQSQEEKH. Disordered stretches follow at residues 1–29 and 42–72; these read MSDP…RIMQ and NGNM…PAVP. Positions 45–56 are enriched in polar residues; it reads MGPTTSLNASNS. Residue Ser148 is modified to Phosphoserine. Polar residues predominate over residues 360–377; sequence GASAASQTQMPTGQTGNC. A disordered region spans residues 360–401; it reads GASAASQTQMPTGQTGNCESPLGSKEDLNSKENLDADEGDGK. 2 positions are modified to phosphoserine: Ser379 and Ser383. Residues 383 to 401 show a composition bias toward basic and acidic residues; that stretch reads SKEDLNSKENLDADEGDGK. The Rap-GAP domain maps to 595–812; sequence LLKLDEQGLS…RTRQEYLKDL (218 aa). Residues 950-1026 enclose the PDZ domain; that stretch reads EMTLRRNGLG…VKVVIIQPHD (77 aa). Position 1029 is a phosphoserine (Ser1029). Disordered regions lie at residues 1067–1245 and 1330–1360; these read HRVP…FGSG and EGSM…SKSS. Low complexity-rich tracts occupy residues 1093-1102 and 1119-1130; these read QQLLQQAQAA and SSPSNQSSSSDP. Composition is skewed to basic and acidic residues over residues 1164–1183 and 1194–1217; these read DGAR…ETKW and YKER…HIGD. A compositionally biased stretch (low complexity) spans 1219 to 1236; sequence SCSSHSSSNTLSSNTSSN. Residue Ser1244 is modified to Phosphoserine. Over residues 1337–1360 the composition is skewed to low complexity; the sequence is SEISSHSSGSHHSGSPSAHCSKSS. 7 positions are modified to phosphoserine: Ser1461, Ser1472, Ser1478, Ser1488, Ser1549, Ser1552, and Ser1591. A coiled-coil region spans residues 1654 to 1712; it reads LTGKVNQLELILRQLQTDLRKEKQDKAVLQAEVQHLRQDNMRLQEESQTATAQLRKFTE.

The chain is Signal-induced proliferation-associated 1-like protein 2 (SIPA1L2) from Homo sapiens (Human).